Reading from the N-terminus, the 396-residue chain is DNA-directed RNA polymerase subunit 6 (396 aa).

Disordered regions lie at residues 1 to 137 (MSSK…DIED) and 290 to 396 (NQQK…DYSE). 3 stretches are compositionally biased toward acidic residues: residues 21–53 (EYYD…DDEN), 76–88 (IDPD…DTDG), and 97–137 (EMGE…DIED). Positions 290–312 (NQQKNSTTDTETLSTQENASTRV) are enriched in polar residues. 2 stretches are compositionally biased toward low complexity: residues 313–338 (SGSN…SKSN) and 346–366 (NSRT…SRTG). The span at 367–380 (SKSKKSSNTKSKSK) shows a compositional bias: basic residues. Residues 385 to 396 (NSDDSDYSDYSE) show a composition bias toward acidic residues.

The protein belongs to the archaeal Rpo6/eukaryotic RPB6 RNA polymerase subunit family.

The enzyme catalyses RNA(n) + a ribonucleoside 5'-triphosphate = RNA(n+1) + diphosphate. In terms of biological role, DNA-dependent RNA polymerase catalyzes the transcription of DNA into RNA using the four ribonucleoside triphosphates as substrates. This chain is DNA-directed RNA polymerase subunit 6, found in Acanthamoeba polyphaga (Amoeba).